Here is a 361-residue protein sequence, read N- to C-terminus: Deoxyribonuclease-2-beta (361 aa).

The first 27 residues, 1 to 27, serve as a signal peptide directing secretion; the sequence is MKQKMMARLLRTSFALLFLGLFGVLGA. Residues Asn81, Asn103, Asn119, and Asn278 are each glycosylated (N-linked (GlcNAc...) asparagine).

The protein belongs to the DNase II family. As to expression, highly expressed in the eye lens and in salivary gland. Detected at lower levels in lung, prostate and lymph node. Isoform 2 is lung specific.

The protein localises to the lysosome. The catalysed reaction is Endonucleolytic cleavage to nucleoside 3'-phosphates and 3'-phosphooligonucleotide end-products.. Functionally, hydrolyzes DNA under acidic conditions. Does not require divalent cations for activity. Participates in the degradation of nuclear DNA during lens cell differentiation. This Homo sapiens (Human) protein is Deoxyribonuclease-2-beta (DNASE2B).